A 1299-amino-acid polypeptide reads, in one-letter code: MAAVFGIQLVPKLNTSTTRRTFLPLRFDLLLDRLQSTNLHGVLYRALDFNPVDRSATVIQTYPPLNAWSPHPAFIENPLDYRDWTEFIHDRALAFVGVLTQRYPLTQNAQRYTNPLVLGAAFGDFLNARSIDIFLDRLFYGPTQESPITSITKFPYQWTIDFNVTADSVRTPAGCKYITLYGYDPSRPSTPATYGKHRPTYATVFYYSTLPARSRLLANLAAGPTVLEHFDSPTYGPHLLLPQTGDVLGYSSSLISQAALLMVESVMDALRDNANASASTAVTRLDQSYHPVTSFDPSTFNTLLQRATNLALLAVQGVQSESAIPAIPTMSDVRSFVARLMAEGDPQQWFPYRVDQILYWPESPFVPPIGPFYAPFRPVNFPFTTGSYTVVPDASRPLRLLPQYRNATITVQQADDAYEDTALSPLITTHGFCVTGGVSTSIYDISGDPTAYPPAQLVDTPNDYFDRERMARRDLFRRLRAPADRSAIKDRAVFDFLASLVNPTTANPVLDTSFSMAYLGASSAHANADEPVILADIRSGSIPGLPIPRRIVQFGYDVVHGSLLDLSRAVPTGTFGLVYADLDQVEDAGTDMPAANRAAIAMLGTALQMTTAGGVSVLKVNFPTRAFWTQVFNLYATHATTLHLVKPTIVNSSEVFLVFGGRQSNGALRSTTALQRALLSLYARNAAIDRAVTHIPFFGVPDDGTSDLGIDAVRLFDPMFSDAVANLPSNALASLVSRVVPSSIMFTRVPSNGPVSTTIYGKRTFLSNRRRARLRDVPMLITTTLVHQRRFTTPPTFTLFSSEAVPVTTLVAAGYNSFISEQTRNPNLAHLLDLGTGPECRILSLIPPTLQVTMSDARPCAELMASFDPALTAYVQGDYSTAAFWNGIRCDSATAIFTLGAAAAAAGTDLIAFVQQLIPRIVAAGGTRMWLQLNTPLYEVSSLPDLIDIDLRDRVYRFNGGERVEPYADPVPLQQAIAALLPAAALSWHTLSPTCDWLPYIIGVGSPLNLSDINTAISYSRLTPILHIDTTTPPLRVNPVPTPLNQQCAIRITSLDPAAVLSVQHNGVEVIGGTPGNVISVAGAAALQYILANQEFLLQFTPTLPGIFDVFLTTLGQPPVPRGSFTITPPPTTVVLNMPPPGQLDFTDVGNDARITCDPYYQLAVCIFKDGQYVRVNPEKASVVTNAPNRDLHFVLDLADNHVLLYLCDVTPSGLGDRIAFPIVDIYRIAFPRNTPVRASLPYTGGGAHLTSGGNPFMSLTTPPAVLPAGVALAALSTSVATQYPTYTLPAGVYEYVIE.

The protein belongs to the aquareoviridae outer capsid VP1 protein family.

It localises to the virion. The enzyme catalyses a 5'-end diphospho-ribonucleoside in mRNA + GTP + H(+) = a 5'-end (5'-triphosphoguanosine)-ribonucleoside in mRNA + diphosphate. The catalysed reaction is a 5'-end (5'-triphosphoguanosine)-ribonucleoside in mRNA + S-adenosyl-L-methionine = a 5'-end (N(7)-methyl 5'-triphosphoguanosine)-ribonucleoside in mRNA + S-adenosyl-L-homocysteine. In terms of biological role, outer capsid protein involved in mRNA capping. Catalyzes the last 3 enzymatic activities for formation of the 5' cap structure on the viral plus-strand transcripts, namely the RNA guanylyltransferase, RNA-7N- and RNA-2'O-methyltransferase activities. The polypeptide is Outer capsid protein VP1 (S1) (Aquareovirus C (isolate Golden shiner/USA/GSRV/1977) (AQRV-C)).